Reading from the N-terminus, the 196-residue chain is Probable malonic semialdehyde reductase RutE (196 aa).

This sequence belongs to the nitroreductase family. HadB/RutE subfamily. FMN serves as cofactor.

The enzyme catalyses 3-hydroxypropanoate + NADP(+) = 3-oxopropanoate + NADPH + H(+). Its function is as follows. May reduce toxic product malonic semialdehyde to 3-hydroxypropionic acid, which is excreted. The sequence is that of Probable malonic semialdehyde reductase RutE from Escherichia coli O157:H7.